The following is a 297-amino-acid chain: Probable endonuclease 4 (297 aa).

Zn(2+) is bound by residues His-69, His-110, Glu-145, Asp-179, His-182, His-214, Asp-227, His-229, and Glu-259.

It belongs to the AP endonuclease 2 family. The cofactor is Zn(2+).

It catalyses the reaction Endonucleolytic cleavage to 5'-phosphooligonucleotide end-products.. Its function is as follows. Endonuclease IV plays a role in DNA repair. It cleaves phosphodiester bonds at apurinic or apyrimidinic (AP) sites, generating a 3'-hydroxyl group and a 5'-terminal sugar phosphate. This is Probable endonuclease 4 from Listeria monocytogenes serovar 1/2a (strain ATCC BAA-679 / EGD-e).